The following is a 54-amino-acid chain: H-bracotoxin-Cf4 (54 aa).

A signal peptide spans 1–21 (MSKLFIFFLLVALLAFVSSEA). Disulfide bonds link Cys-24/Cys-39, Cys-31/Cys-43, and Cys-38/Cys-53.

In terms of tissue distribution, expressed by the venom duct.

It localises to the secreted. Functionally, this endoparasitoid wasp peptide has a role in disruption of the cellular host immune response, since it reduces the capacity of D.saccharalis hemocytes to encapsulate foreign bodies. On the other hand, it shows no effect on the humoral immune response, since it has no effect on phenoloxidase activity. The protein is H-bracotoxin-Cf4 of Cotesia flavipes (Parasitic wasp).